The following is a 140-amino-acid chain: MLLLKASAICGKGNEGKRNKKGGFTLIELTVVLAIMAIILMVIAPNFSYVKDSAKAKVDKQNCAAIERSVEMLLAEDAISSSVTNIKITSSNGNVQISGISDDTGKSKLQDLLEDLDKPQSGDSYNVDIENGRKVTVSIV.

Residues 1 to 23 constitute a propeptide that is removed on maturation; the sequence is MLLLKASAICGKGNEGKRNKKGG. The residue at position 24 (phenylalanine 24) is an N-methylphenylalanine. The helical transmembrane segment at 24–44 threads the bilayer; sequence FTLIELTVVLAIMAIILMVIA.

Its subcellular location is the membrane. Its function is as follows. Not yet known. This Clostridium perfringens (strain 13 / Type A) protein is Prepilin peptidase-dependent protein A (ppdA).